Here is a 129-residue protein sequence, read N- to C-terminus: Cytochrome c oxidase subunit 5B, mitochondrial (129 aa).

The transit peptide at 1 to 31 (MASRLLRGAGALAAQTLRARGPNGVAVVRSM) directs the protein to the mitochondrion. Residues K68 and K86 each carry the N6-acetyllysine modification. Zn(2+)-binding residues include C91, C93, C113, and C116. K121 is modified (N6-acetyllysine).

It belongs to the cytochrome c oxidase subunit 5B family. In terms of assembly, component of the cytochrome c oxidase (complex IV, CIV), a multisubunit enzyme composed of 14 subunits. The complex is composed of a catalytic core of 3 subunits MT-CO1, MT-CO2 and MT-CO3, encoded in the mitochondrial DNA, and 11 supernumerary subunits COX4I, COX5A, COX5B, COX6A, COX6B, COX6C, COX7A, COX7B, COX7C, COX8 and NDUFA4, which are encoded in the nuclear genome. The complex exists as a monomer or a dimer and forms supercomplexes (SCs) in the inner mitochondrial membrane with NADH-ubiquinone oxidoreductase (complex I, CI) and ubiquinol-cytochrome c oxidoreductase (cytochrome b-c1 complex, complex III, CIII), resulting in different assemblies (supercomplex SCI(1)III(2)IV(1) and megacomplex MCI(2)III(2)IV(2)).

It localises to the mitochondrion inner membrane. Its pathway is energy metabolism; oxidative phosphorylation. Its function is as follows. Component of the cytochrome c oxidase, the last enzyme in the mitochondrial electron transport chain which drives oxidative phosphorylation. The respiratory chain contains 3 multisubunit complexes succinate dehydrogenase (complex II, CII), ubiquinol-cytochrome c oxidoreductase (cytochrome b-c1 complex, complex III, CIII) and cytochrome c oxidase (complex IV, CIV), that cooperate to transfer electrons derived from NADH and succinate to molecular oxygen, creating an electrochemical gradient over the inner membrane that drives transmembrane transport and the ATP synthase. Cytochrome c oxidase is the component of the respiratory chain that catalyzes the reduction of oxygen to water. Electrons originating from reduced cytochrome c in the intermembrane space (IMS) are transferred via the dinuclear copper A center (CU(A)) of subunit 2 and heme A of subunit 1 to the active site in subunit 1, a binuclear center (BNC) formed by heme A3 and copper B (CU(B)). The BNC reduces molecular oxygen to 2 water molecules using 4 electrons from cytochrome c in the IMS and 4 protons from the mitochondrial matrix. In Sus scrofa (Pig), this protein is Cytochrome c oxidase subunit 5B, mitochondrial (COX5B).